A 285-amino-acid polypeptide reads, in one-letter code: Ribosomal RNA small subunit methyltransferase H (285 aa).

S-adenosyl-L-methionine contacts are provided by residues 34-36 (AGH), Asp51, Phe75, Asp96, and His103. Residues 259–285 (LVPSEKEAAQNPRARSAKLRAAEKEAP) are disordered.

The protein belongs to the methyltransferase superfamily. RsmH family.

It localises to the cytoplasm. The enzyme catalyses cytidine(1402) in 16S rRNA + S-adenosyl-L-methionine = N(4)-methylcytidine(1402) in 16S rRNA + S-adenosyl-L-homocysteine + H(+). Functionally, specifically methylates the N4 position of cytidine in position 1402 (C1402) of 16S rRNA. This Thermus thermophilus (strain ATCC 27634 / DSM 579 / HB8) protein is Ribosomal RNA small subunit methyltransferase H.